The chain runs to 142 residues: Peptide methionine sulfoxide reductase MsrB (142 aa).

The MsrB domain maps to 2 to 125 (IKKNKNDLNE…NSAAVQFIPY (124 aa)). The Nucleophile role is filled by Cys-114.

This sequence belongs to the MsrB Met sulfoxide reductase family.

The enzyme catalyses L-methionyl-[protein] + [thioredoxin]-disulfide + H2O = L-methionyl-(R)-S-oxide-[protein] + [thioredoxin]-dithiol. The chain is Peptide methionine sulfoxide reductase MsrB from Staphylococcus saprophyticus subsp. saprophyticus (strain ATCC 15305 / DSM 20229 / NCIMB 8711 / NCTC 7292 / S-41).